The following is a 614-amino-acid chain: V-type proton ATPase catalytic subunit A isoform 1 (614 aa).

ATP is bound at residue 247-254 (GAFGCGKT).

It belongs to the ATPase alpha/beta chains family. In terms of assembly, V-ATPase is a heteromultimeric enzyme made up of two complexes: the ATP-hydrolytic V1 complex and the proton translocation V0 complex. The V1 complex consists of three catalytic AB heterodimers that form a heterohexamer, three peripheral stalks each consisting of EG heterodimers, one central rotor including subunits D and F, and the regulatory subunits C and H. The proton translocation complex V0 consists of the proton transport subunit a, a ring of proteolipid subunits c9c'', rotary subunit d, subunits e and f, and the accessory subunits VhaAC45 and ATP6AP2.

The enzyme catalyses ATP + H2O + 4 H(+)(in) = ADP + phosphate + 5 H(+)(out). ATP hydrolysis occurs at the interface between the nucleotide-binding domains of subunits A and B. ATP hydrolysis triggers a conformational change in the subunits D and F, which induces a shift of subunit d. The c-ring is subsequently rotated and results in a continuous proton translocation across the membrane. Its function is as follows. Catalytic subunit of the V1 complex of vacuolar(H+)-ATPase (V-ATPase), a multisubunit enzyme composed of a peripheral complex (V1) that hydrolyzes ATP and a membrane integral complex (V0) that translocates protons. V-ATPase is responsible for acidifying and maintaining the pH of intracellular compartments and in some cell types, is targeted to the plasma membrane, where it is responsible for acidifying the extracellular environment. The sequence is that of V-type proton ATPase catalytic subunit A isoform 1 (Vha68-1) from Drosophila melanogaster (Fruit fly).